Here is a 723-residue protein sequence, read N- to C-terminus: Nucleolar protein 11 (723 aa).

An N6-methyllysine modification is found at lysine 346. The segment at 549 to 572 (FGPEDGNCSEDSQQLNDKPADTAH) is disordered.

In terms of assembly, interacts with UTP4. Interacts with FBL/fibrillarin in a transcription-dependent manner. May associate with the proposed t-UTP subcomplex of the SSU processome containing at least UTP4, WDR43, HEATR1, UTP15, WDR75.

The protein resides in the nucleus. It is found in the nucleolus. Ribosome biogenesis factor. May be required for both optimal rDNA transcription and small subunit (SSU) pre-rRNA processing at sites A', A0, 1 and 2b. This is Nucleolar protein 11 (Nol11) from Mus musculus (Mouse).